Reading from the N-terminus, the 788-residue chain is Integrin beta-6 (788 aa).

The first 21 residues, 1–21 (MGIELLCFFFLFLGRDDHVRG), serve as a signal peptide directing secretion. The 50-residue stretch at 22–71 (GCAMEGAETCGDCLLIGPQCAWCSQENFTHPSGVSERCDTPANLLAKGCQ) folds into the PSI domain. The Extracellular segment spans residues 22 to 709 (GCAMEGAETC…KDCPKPPNIP (688 aa)). Cystine bridges form between Cys-23/Cys-41, Cys-31/Cys-454, Cys-34/Cys-59, Cys-44/Cys-70, Cys-197/Cys-204, Cys-252/Cys-293, Cys-394/Cys-406, Cys-426/Cys-452, Cys-456/Cys-476, Cys-467/Cys-479, Cys-481/Cys-490, Cys-492/Cys-519, Cys-502/Cys-517, Cys-511/Cys-522, Cys-524/Cys-537, Cys-539/Cys-560, Cys-544/Cys-558, Cys-552/Cys-563, and Cys-565/Cys-574. N-linked (GlcNAc...) asparagine glycosylation is found at Asn-48 and Asn-97. The 241-residue stretch at 131–371 (YPVDLYYLMD…QLIISAYEEL (241 aa)) folds into the VWFA domain. Asp-140, Ser-142, and Ser-144 together coordinate Mg(2+). The Ca(2+) site is built by Ser-144, Asp-147, Asp-148, and Glu-179. Residues Asn-235, Asp-237, Pro-239, and Glu-240 each contribute to the Ca(2+) site. Glu-240 contacts Mg(2+). Asn-260 carries N-linked (GlcNAc...) asparagine glycosylation. Positions 271 and 355 each coordinate Ca(2+). N-linked (GlcNAc...) asparagine glycans are attached at residues Asn-387, Asn-396, and Asn-418. I-EGF domains lie at 456–491 (CQKEVEVNSSKCHNGNGSYQCGVCACNPGHMGPHCE), 492–538 (CGED…PYCQ), 539–575 (CDNFSCVRHKGLLCGDNGDCECGECVCRSGWTGEYCN), and 576–615 (CTTSTDTCISEDGTLCSGRGDCVCGKCVCTNPGASGPTCE). N-linked (GlcNAc...) asparagine glycans are attached at residues Asn-463 and Asn-471. Residue Asn-541 is glycosylated (N-linked (GlcNAc...) asparagine). Asn-575 is a glycosylation site (N-linked (GlcNAc...) asparagine). 9 cysteine pairs are disulfide-bonded: Cys-576–Cys-599, Cys-583–Cys-597, Cys-591–Cys-602, Cys-604–Cys-614, Cys-617–Cys-620, Cys-624–Cys-670, Cys-630–Cys-649, Cys-633–Cys-645, and Cys-678–Cys-702. Residue Asn-696 is glycosylated (N-linked (GlcNAc...) asparagine). The chain crosses the membrane as a helical span at residues 710 to 730 (MIMLGVSLAILLIGVVLLCIW). The interval 731–758 (KLLVSFHDRKEVAKFEAERSKAKWQTGT) is interaction with HAX1. Over 731-788 (KLLVSFHDRKEVAKFEAERSKAKWQTGTNPLYRGSTSTFKNVTYKHRDKLKTDLSTDG) the chain is Cytoplasmic.

The protein belongs to the integrin beta chain family. In terms of assembly, heterodimer of an alpha and a beta subunit. Interacts with FLNB. Interacts with HAX1. ITGAV:ITGB6 interacts with FBN1. ITGAV:ITGB6 interacts with TGFB1.

It localises to the cell membrane. Its subcellular location is the cell junction. It is found in the focal adhesion. Functionally, integrin alpha-V:beta-6 (ITGAV:ITGB6) is a receptor for fibronectin and cytotactin. It recognizes the sequence R-G-D in its ligands. ITGAV:ITGB6 acts as a receptor for fibrillin-1 (FBN1) and mediates R-G-D-dependent cell adhesion to FBN1. Integrin alpha-V:beta-6 (ITGAV:ITGB6) mediates R-G-D-dependent release of transforming growth factor beta-1 (TGF-beta-1) from regulatory Latency-associated peptide (LAP), thereby playing a key role in TGF-beta-1 activation. This chain is Integrin beta-6 (ITGB6), found in Cavia porcellus (Guinea pig).